Reading from the N-terminus, the 31-residue chain is U8-ctenitoxin-Co1a (31 aa).

Cystine bridges form between cysteine 4–cysteine 18 and cysteine 11–cysteine 24.

In terms of tissue distribution, expressed by the venom gland.

It localises to the secreted. Functionally, blocks voltage-gated sodium channels (Nav). The chain is U8-ctenitoxin-Co1a from Ctenus ornatus (Brazilian spider).